A 29-amino-acid polypeptide reads, in one-letter code: Ranatuerin-2SEa (29 aa).

C23 and C29 are oxidised to a cystine.

As to expression, expressed by the skin glands.

It localises to the secreted. Its function is as follows. Mast cell degranulating peptide. Causes histamine release from rat peritoneal mast cells in vitro. Has antibacterial activity against the Gram-negative bacterium E.coli K12 and Gram-positive bacterium M.luteus NCT C2665. This is Ranatuerin-2SEa from Lithobates sevosus (Dusky gopher frog).